Reading from the N-terminus, the 353-residue chain is Sphingosine 1-phosphate receptor 2 (353 aa).

Residues 1-34 (MGSLYSEYLNPNKVQEHYNYTKETLETQETTSRQ) are Extracellular-facing. Asn-19 carries N-linked (GlcNAc...) asparagine glycosylation. The chain crosses the membrane as a helical span at residues 35–59 (VASAFIVILCCAIVVENLLVLIAVA). At 60–66 (RNSKFHS) the chain is on the cytoplasmic side. A helical transmembrane segment spans residues 67–95 (AMYLFLGNLAASDLLAGVAFVANTLLSGS). At 96 to 109 (VTLRLTPVQWFARE) the chain is on the extracellular side. Residues 110-128 (GSAFITLSASVFSLLAIAI) traverse the membrane as a helical segment. The Cytoplasmic segment spans residues 129-147 (ERHVAIAKVKLYGSDKSCR). A helical transmembrane segment spans residues 148-173 (MLLLIGASWLISLVLGGLPILGWNCL). The Extracellular segment spans residues 174–189 (GHLEACSTVLPLYAKH). Residues 190-210 (YVLCVVTIFSIILLAIVALYV) form a helical membrane-spanning segment. Residues 211–233 (RIYCVVRSSHADMAAPQTLALLK) lie on the Cytoplasmic side of the membrane. Residues 234–255 (TVTIVLGVFIVCWLPAFSILLL) form a helical membrane-spanning segment. Over 256–271 (DYACPVHSCPILYKAH) the chain is Extracellular. A helical membrane pass occupies residues 272–292 (YFFAVSTLNSLLNPVIYTWRS). Residues 293–353 (RDLRREVLRP…PTFLEGNTVV (61 aa)) are Cytoplasmic-facing. Cys-305 carries S-palmitoyl cysteine lipidation.

It belongs to the G-protein coupled receptor 1 family.

Its subcellular location is the cell membrane. In terms of biological role, receptor for the lysosphingolipid sphingosine 1-phosphate (S1P). S1P is a bioactive lysophospholipid that elicits diverse physiological effects on most types of cells and tissues. When expressed in rat HTC4 hepatoma cells, is capable of mediating S1P-induced cell proliferation and suppression of apoptosis. Receptor for the chemokine-like protein FAM19A5. Mediates the inhibitory effect of FAM19A5 on vascular smooth muscle cell proliferation and migration. In lymphoid follicles, couples the binding of S1P to the activation of GNA13 and downstream inhibition of AKT activation leading to suppression of germinal center (GC) B cell growth and migration outside the GC niche. The polypeptide is Sphingosine 1-phosphate receptor 2 (S1PR2) (Homo sapiens (Human)).